The following is a 444-amino-acid chain: Tubulin beta-7 chain (444 aa).

GTP contacts are provided by Gln11, Glu69, Ser138, Gly142, Thr143, Gly144, Asn204, and Asn226. Glu69 provides a ligand contact to Mg(2+).

It belongs to the tubulin family. Dimer of alpha and beta chains. A typical microtubule is a hollow water-filled tube with an outer diameter of 25 nm and an inner diameter of 15 nM. Alpha-beta heterodimers associate head-to-tail to form protofilaments running lengthwise along the microtubule wall with the beta-tubulin subunit facing the microtubule plus end conferring a structural polarity. Microtubules usually have 13 protofilaments but different protofilament numbers can be found in some organisms and specialized cells. Mg(2+) is required as a cofactor.

Its subcellular location is the cytoplasm. It is found in the cytoskeleton. Tubulin is the major constituent of microtubules, a cylinder consisting of laterally associated linear protofilaments composed of alpha- and beta-tubulin heterodimers. Microtubules grow by the addition of GTP-tubulin dimers to the microtubule end, where a stabilizing cap forms. Below the cap, tubulin dimers are in GDP-bound state, owing to GTPase activity of alpha-tubulin. The protein is Tubulin beta-7 chain of Gossypium hirsutum (Upland cotton).